A 648-amino-acid chain; its full sequence is MDEYDEDPGRRASKLMETLSIYDVYQDGMYGEPNPDMEKTKRMNGSSSTPGNKVYSAAPVRSVNGNRASVPLDFCSPQREAVYPDPDVYCTKSEVALPCYSGASDRLRRYTHAEVQGHRYSTGCAYDGLVLGKQVAVSGARSNSLCMSSPDGRYTATSPRSSLASSHSSQDQSKHTSPRSSISSPRSSLVSPGQGEGTSVISPRSSYASTASDTSKHSSPRTSLNSYDCGSKPSSNRTSGISMGYDQRHISPRSSTTSPRSSYSDSRFTPAGGHDPESAAVHGIPMASPRSSICSQPAVAANCVVSPRSSISSHSSRSSRSSRGSMSAYPELQLPMLGPGLPEDALLQDFTEPNGLHNNRVHLQTFPVLEEPQQQNSEVNIGFNYCKAGAGGQRFKLPYQVTPSRDSGPSQAERRLEALTLELEKELEIHMKKEYFGICVKCGKGVYGASQACQAMGNLYHTNCFTCCSCGRRLRGKAFYNVNGKVYCEEDFLYSGFQQTAEKCFVCGHLIMEMILQALGRSYHPGCFRCVICKEGLDGVPFTVDVENNIYCVKDYHTVFAPKCASCNQPILPAQGSEETIRVVSMDKDYHVDCYHCEDCGLQLNDEEGHRCYPLEGHLLCHRCHLHRLKTPLAPHPPPSYPLHVTEL.

3 disordered regions span residues 27–56 (DGMY…KVYS), 142–291 (SNSL…SPRS), and 306–327 (SPRS…GSMS). Low complexity-rich tracts occupy residues 158 to 171 (SPRS…SSQD) and 178 to 192 (PRSS…LVSP). 2 stretches are compositionally biased toward polar residues: residues 197-213 (GTSV…TASD) and 220-241 (PRTS…TSGI). The span at 252–267 (PRSSTTSPRSSYSDSR) shows a compositional bias: low complexity. LIM zinc-binding domains lie at 437-498 (GICV…SGFQ), 502-561 (EKCF…TVFA), and 562-631 (PKCA…RLKT).

It belongs to the zyxin/ajuba family.

Its subcellular location is the cell junction. It localises to the adherens junction. The protein resides in the nucleus. In terms of biological role, may monitor slit diaphragm protein assembly, a specialized adherens junction characteristic of podocytes. In case of podocyte injury, it shuttles into the nucleus and acts as a transcription regulator. Plays a role in the regulation of cell morphology and cytoskeletal organization. Acts as a transcriptional corepressor for snai1 and snai2/slug and plays a role in regulating neural crest development. In Danio rerio (Zebrafish), this protein is Wilms tumor protein 1-interacting protein homolog (wtip).